The primary structure comprises 422 residues: Serine protease inhibitor A3A (422 aa).

The first 17 residues, 1–17, serve as a signal peptide directing secretion; sequence MAFIAALGLLMVGICPA. 3 N-linked (GlcNAc...) asparagine glycosylation sites follow: Asn218, Asn230, and Asn271. The segment at 369-394 is RCL; that stretch reads HTEADVITIARYNFQSAKIKAKIVKV.

Belongs to the serpin family.

It is found in the secreted. This is Serine protease inhibitor A3A (Serpina3a) from Mus musculus (Mouse).